The following is a 123-amino-acid chain: Small ribosomal subunit protein uS13 (123 aa).

The interval 95–123 is disordered; sequence GLPVRGQRTKTNARTRKGPARTVAGKKKK.

Belongs to the universal ribosomal protein uS13 family. In terms of assembly, part of the 30S ribosomal subunit. Forms a loose heterodimer with protein S19. Forms two bridges to the 50S subunit in the 70S ribosome.

In terms of biological role, located at the top of the head of the 30S subunit, it contacts several helices of the 16S rRNA. In the 70S ribosome it contacts the 23S rRNA (bridge B1a) and protein L5 of the 50S subunit (bridge B1b), connecting the 2 subunits; these bridges are implicated in subunit movement. Contacts the tRNAs in the A and P-sites. This chain is Small ribosomal subunit protein uS13, found in Heliobacterium modesticaldum (strain ATCC 51547 / Ice1).